The sequence spans 705 residues: Crooked neck-like protein 1 (705 aa).

HAT repeat units follow at residues 55 to 87 (DYRL…WEES), 89 to 121 (KDLT…MEMK), 123 to 155 (KNIN…MEDM), 157 to 188 (GNYP…FEQR), 190 to 221 (KLFE…FEER), 223 to 258 (GNIE…FEEK), 260 to 294 (KEIE…FEKQ), 304 to 336 (VVLG…MEEI), 338 to 372 (GEIE…LWIN), 382 to 418 (KDME…FEIR), 420 to 451 (LNLD…LEIE), 453 to 485 (GNFD…LETE), 487 to 521 (GETV…SEIQ), and 523 to 554 (KQFD…FVHS). The segment at 559-591 (QQQKQRQQQQEEDGDSNTTKKDGGDDDNNDDIN) is disordered. Residues 597 to 629 (IFIEAHKSLSNSDKEERLLLLESWKEFEQTFGN) form an HAT 15 repeat.

Belongs to the crooked-neck family. As to quaternary structure, identified in the spliceosome C complex.

It localises to the nucleus. Its subcellular location is the nucleus speckle. Its function is as follows. Involved in pre-mRNA splicing process. This is Crooked neck-like protein 1 (crnkl1) from Dictyostelium discoideum (Social amoeba).